The sequence spans 916 residues: MTDATIRHDHKFALETLPVSLEDEMRKSYLDYAMSVIVGRALPDVRDGLKPVHRRVLYAMHELKNNWNAAYKKSARIVGDVIGKYHPHGDSAVYDTIVRMAQNFAMRYVLIDGQGNFGSVDGLAAAAMRYTEIRMAKISHEMLADIEEETVNFGPNYDGSEHEPLVLPTRFPTLLVNGSSGIAVGMATNIPPHNLTDTINACLRLLDEPKTEIDELIDIIQAPDFPTGATIYGLGGVREGYKTGRGRVVMRGKTHIEPIGKNGERERIVIDEIPYQVNKAKLVEKIGDLVREKTLEGISELRDESDKSGMRVVIELKRNENAEVVLNQLYKLTPLQDSFGINMVVLVDGQPRLLNLKQILSEFLRHRREVVTRRTLFRLKKARHEGHIAERKAVALSNIDEIIKLIKESPNAAEAKEKLLARPWASSLVEEMLTRSGLDLEMMRPEGLVANIGLKKQGYYLSEIQADAILRMSLRNLTGLDQKEIIESYKNLMGKIIDFVDILSKPERITQIIRDELEEIKTNYGDERRSEINPFGGDIADEDLIPQREMVVTLTHGGYIKTQPTTDYQAQRRGGRGKQAAATKDEDFIETLFVANTHDYLMCFTNLGKCHWIKVYKLPEGGRNSRGRPINNVIQLEEGEKVSAILAVREFPEDQYVFFATAQGMVKKVQLSAFKNVRAQGIKAIALKEGDYLVGAAQTGGADDIMLFSNLGKAIRFNEYWEKSGNDEAEDADIETEISDDLEDETADNENTLPSGKNGVRPSGRGSGGLRGMRLPADGKIVSLITFAPETEESGLQVLTATANGYGKRTPIADYSRKNKGGQGSIAINTGERNGDLVAATLVGETDDLMLITSGGVLIRTKVEQIRETGRAAAGVKLINLDEGETLVSLERVAEDESELSGASVISNVTEPEAEN.

A Topo IIA-type catalytic domain is found at leucine 42–leucine 544. Tyrosine 130 functions as the O-(5'-phospho-DNA)-tyrosine intermediate in the catalytic mechanism. The GyrA-box signature appears at glutamine 571–glycine 577. Residues serine 739 to aspartate 748 show a composition bias toward acidic residues. 2 disordered regions span residues serine 739–arginine 774 and glutamate 897–asparagine 916.

This sequence belongs to the type II topoisomerase GyrA/ParC subunit family. In terms of assembly, heterotetramer, composed of two GyrA and two GyrB chains. In the heterotetramer, GyrA contains the active site tyrosine that forms a transient covalent intermediate with DNA, while GyrB binds cofactors and catalyzes ATP hydrolysis.

Its subcellular location is the cytoplasm. The enzyme catalyses ATP-dependent breakage, passage and rejoining of double-stranded DNA.. Its function is as follows. A type II topoisomerase that negatively supercoils closed circular double-stranded (ds) DNA in an ATP-dependent manner to modulate DNA topology and maintain chromosomes in an underwound state. Negative supercoiling favors strand separation, and DNA replication, transcription, recombination and repair, all of which involve strand separation. Also able to catalyze the interconversion of other topological isomers of dsDNA rings, including catenanes and knotted rings. Type II topoisomerases break and join 2 DNA strands simultaneously in an ATP-dependent manner. The protein is DNA gyrase subunit A of Neisseria gonorrhoeae.